A 517-amino-acid chain; its full sequence is Maturase K (517 aa).

It belongs to the intron maturase 2 family. MatK subfamily.

The protein resides in the plastid. It is found in the chloroplast. In terms of biological role, usually encoded in the trnK tRNA gene intron. Probably assists in splicing its own and other chloroplast group II introns. The chain is Maturase K from Veronica arvensis (Wall speedwell).